The chain runs to 56 residues: Photosystem II reaction center protein K (56 aa).

A propeptide spanning residues 1–19 (MLNFLLQNTFVLWSNFILC) is cleaved from the precursor. The helical transmembrane segment at 35–55 (MPVIPVFFFLLAFVWQAAVSF) threads the bilayer.

It belongs to the PsbK family. PSII is composed of 1 copy each of membrane proteins PsbA, PsbB, PsbC, PsbD, PsbE, PsbF, PsbH, PsbI, PsbJ, PsbK, PsbL, PsbM, PsbT, PsbX, PsbY, PsbZ, Psb30/Ycf12, at least 3 peripheral proteins of the oxygen-evolving complex and a large number of cofactors. It forms dimeric complexes.

The protein localises to the plastid. Its subcellular location is the chloroplast thylakoid membrane. Its function is as follows. One of the components of the core complex of photosystem II (PSII). PSII is a light-driven water:plastoquinone oxidoreductase that uses light energy to abstract electrons from H(2)O, generating O(2) and a proton gradient subsequently used for ATP formation. It consists of a core antenna complex that captures photons, and an electron transfer chain that converts photonic excitation into a charge separation. This chain is Photosystem II reaction center protein K, found in Welwitschia mirabilis (Tree tumbo).